The chain runs to 530 residues: Ubiquitin carboxyl-terminal hydrolase 17-like protein 17 (530 aa).

The USP domain maps to 80-375 (AGLQNMGNTC…QAYVLFYIQK (296 aa)). The active-site Nucleophile is Cys-89. His-334 (proton acceptor) is an active-site residue. Basic and acidic residues-rich tracts occupy residues 382–392 (SESVSRGREPR) and 398–411 (DTDRRATQGELKRD). Disordered stretches follow at residues 382–411 (SESVSRGREPRALGAEDTDRRATQGELKRD) and 477–530 (NHHP…LVCQ). The span at 493–505 (TPTHQESMNTGTL) shows a compositional bias: polar residues. Positions 510–524 (GRARRSKGKNKHSKR) are enriched in basic residues.

It belongs to the peptidase C19 family. USP17 subfamily.

It localises to the nucleus. Its subcellular location is the endoplasmic reticulum. It catalyses the reaction Thiol-dependent hydrolysis of ester, thioester, amide, peptide and isopeptide bonds formed by the C-terminal Gly of ubiquitin (a 76-residue protein attached to proteins as an intracellular targeting signal).. Functionally, deubiquitinating enzyme that removes conjugated ubiquitin from specific proteins to regulate different cellular processes that may include cell proliferation, progression through the cell cycle, apoptosis, cell migration, and the cellular response to viral infection. The chain is Ubiquitin carboxyl-terminal hydrolase 17-like protein 17 (USP17L17) from Homo sapiens (Human).